A 341-amino-acid chain; its full sequence is UDP-glucuronic acid decarboxylase 5 (341 aa).

A disordered region spans residues 1–21 (MASSDKQTSPKPPPSPSPLRN). 60–85 (DNYFTGSKDNLKKWIGHPRFELIRHD) is a binding site for NAD(+). Arg169 lines the substrate pocket. Tyr172 functions as the Proton acceptor in the catalytic mechanism. An NAD(+)-binding site is contributed by 172-176 (YDEGK). Residue Asn201 coordinates substrate. Arg213 contacts NAD(+). Substrate contacts are provided by residues 214–218 (VVSNF), 231–238 (QKPGTQTR), and 298–302 (DPRQR).

The protein belongs to the NAD(P)-dependent epimerase/dehydratase family. UDP-glucuronic acid decarboxylase subfamily. The cofactor is NAD(+).

It localises to the cytoplasm. The enzyme catalyses UDP-alpha-D-glucuronate + H(+) = UDP-alpha-D-xylose + CO2. Its pathway is nucleotide-sugar biosynthesis; UDP-alpha-D-xylose biosynthesis; UDP-alpha-D-xylose from UDP-alpha-D-glucuronate: step 1/1. Its function is as follows. Catalyzes the NAD-dependent decarboxylation of UDP-glucuronic acid to UDP-xylose. Necessary for the biosynthesis of the core tetrasaccharide in glycosaminoglycan biosynthesis. The chain is UDP-glucuronic acid decarboxylase 5 (UXS5) from Arabidopsis thaliana (Mouse-ear cress).